We begin with the raw amino-acid sequence, 500 residues long: Aspartyl/glutamyl-tRNA(Asn/Gln) amidotransferase subunit B (500 aa).

This sequence belongs to the GatB/GatE family. GatB subfamily. Heterotrimer of A, B and C subunits.

It carries out the reaction L-glutamyl-tRNA(Gln) + L-glutamine + ATP + H2O = L-glutaminyl-tRNA(Gln) + L-glutamate + ADP + phosphate + H(+). The enzyme catalyses L-aspartyl-tRNA(Asn) + L-glutamine + ATP + H2O = L-asparaginyl-tRNA(Asn) + L-glutamate + ADP + phosphate + 2 H(+). Its function is as follows. Allows the formation of correctly charged Asn-tRNA(Asn) or Gln-tRNA(Gln) through the transamidation of misacylated Asp-tRNA(Asn) or Glu-tRNA(Gln) in organisms which lack either or both of asparaginyl-tRNA or glutaminyl-tRNA synthetases. The reaction takes place in the presence of glutamine and ATP through an activated phospho-Asp-tRNA(Asn) or phospho-Glu-tRNA(Gln). This is Aspartyl/glutamyl-tRNA(Asn/Gln) amidotransferase subunit B from Allorhizobium ampelinum (strain ATCC BAA-846 / DSM 112012 / S4) (Agrobacterium vitis (strain S4)).